Consider the following 403-residue polypeptide: uncharacterized protein (403 aa).

His-81 contacts Zn(2+). Residue Asp-83 is part of the active site. Asp-114 is a Zn(2+) binding site. Glu-148 serves as the catalytic Proton acceptor. Residues Glu-149, Glu-174, and His-374 each coordinate Zn(2+).

This sequence belongs to the peptidase M20A family. Requires Zn(2+) as cofactor. It depends on Co(2+) as a cofactor.

This is an uncharacterized protein from Escherichia coli O157:H7.